A 276-amino-acid chain; its full sequence is MAVRELPGAWNFRDVADTATALRPGRLFRSSELSRLDDAGRATLRRLGITDVADLRSSREVARRGPGRVPDGIDVHLLPFPDLADDDADDSAPHETAFKRLLTNDGSNGESGESSQSINDAATRYMTDEYRQFPTRNGAQRALHRVVTLLAAGRPVLTHCFAGKDRTGFVVALVLEAVGLDRDVIVADYLRSNDSVPQLRARISEMIQQRFDTELAPEVVTFTKARLSDGVLGVRAEYLAAARQTIDETYGSLGGYLRDAGISQATVNRMRGVLLG.

Cysteine 160 (phosphocysteine intermediate) is an active-site residue. Positions 232–250 (LGVRAEYLAAARQTIDETY) are UIM-like region.

The protein belongs to the protein-tyrosine phosphatase family. In terms of assembly, interacts (via UIM-like region) with host ubiquitin; activating the phosphatidylinositol phosphate phosphatase activity.

It localises to the secreted. Its subcellular location is the host cytoplasm. It is found in the host cell membrane. It carries out the reaction O-phospho-L-tyrosyl-[protein] + H2O = L-tyrosyl-[protein] + phosphate. The enzyme catalyses O-phospho-L-seryl-[protein] + H2O = L-seryl-[protein] + phosphate. It catalyses the reaction O-phospho-L-threonyl-[protein] + H2O = L-threonyl-[protein] + phosphate. The catalysed reaction is 1,2-dioctanoyl-sn-glycero-3-phospho-(1-D-myo-inositol-3-phosphate) + H2O = 1,2-dioctanoyl-sn-glycero-3-phospho-(1D-myo-inositol) + phosphate. It carries out the reaction 1,2-dioctanoyl-sn-glycero-3-phospho-(1-D-myo-inositol-4-phosphate) + H2O = 1,2-dioctanoyl-sn-glycero-3-phospho-(1D-myo-inositol) + phosphate. The enzyme catalyses 1,2-dioctanoyl-sn-glycero-3-phospho-(1D-myo-inositol-5-phosphate) + H2O = 1,2-dioctanoyl-sn-glycero-3-phospho-(1D-myo-inositol) + phosphate. With respect to regulation, binding to host ubiquitin is required to activate the phosphatidylinositol phosphate phosphatase activity. Phosphatase activity is inhibited by sodium orthovanadate, a specific inhibitor of tyrosine phosphatases, but not by okadaic acid, an inhibitor of serine/threonine phosphatases. Inhibition of the enzyme reduces mycobacterial survival in infected macrophages. Inhibitors also enhance killing efficacy by first-line antibiotics. Functionally, essential virulence factor that promotes mycobacterial survival within host macrophages. Acts as a phosphatase that possesses triple substrate specificity toward phosphotyrosine, phosphoserine/threonine and phosphoinositides. Supports mycobacteria survival during infection by modulating the normal host signaling pathways, attenuating the bactericidal immune responses and promoting the host cell survival. Inhibits host pyroptosis by disrupting the membrane localization of host gasdermin-D (GSDMD): acts by catalyzing dephosphorylation of phosphatidylinositol (4,5)-bisphosphate and phosphatidylinositol 4-phosphate, thereby inhibiting the membrane targeting of GSDMD and subsequent cytokine release and pyroptosis. Inhibits host inflammatory responses and apoptosis through impeding the NF-kappa-B and MAPK signal pathways and TP53/p53 expression in the macrophage. Blocks the IL6/IL-6 production by down-regulating ERK1/2, p38 and p65 activity. Prevents macrophage cell death by activating the Akt pathway and blocking caspase 3 activity. Reduces the expression of iNOS in activated macrophages and inhibits the generation of destroying reactive nitrogen intermediate NO. The polypeptide is Triple specificity protein phosphatase PtpB (Mycobacterium tuberculosis (strain ATCC 25618 / H37Rv)).